The sequence spans 320 residues: Ferrochelatase (320 aa).

2 residues coordinate Fe cation: histidine 194 and glutamate 275.

This sequence belongs to the ferrochelatase family.

It is found in the cytoplasm. It catalyses the reaction heme b + 2 H(+) = protoporphyrin IX + Fe(2+). Its pathway is porphyrin-containing compound metabolism; protoheme biosynthesis; protoheme from protoporphyrin-IX: step 1/1. Functionally, catalyzes the ferrous insertion into protoporphyrin IX. The sequence is that of Ferrochelatase from Cronobacter sakazakii (strain ATCC BAA-894) (Enterobacter sakazakii).